The sequence spans 776 residues: Protein FAM83C (776 aa).

Residues M1 to G340 form a DUF1669 region. Disordered stretches follow at residues N344–P467, S494–H565, H617–R653, P669–A694, and Q716–P745. A compositionally biased stretch (low complexity) spans S368–S385. Positions P452 to P467 are enriched in polar residues. Positions V523–R539 are enriched in basic and acidic residues. Positions S554 to L563 are enriched in polar residues.

Belongs to the FAM83 family. As to quaternary structure, directly interacts (via DUF1669) with CSNK1A1 and CSNK1A1L. May interact with RAF1. Phosphorylated by CSNK1A1.

Its subcellular location is the cytoplasm. In terms of biological role, may play a role in MAPK signaling. The chain is Protein FAM83C from Mus musculus (Mouse).